A 328-amino-acid chain; its full sequence is uncharacterized protein (328 aa).

This is an uncharacterized protein from Saccharomyces cerevisiae (strain ATCC 204508 / S288c) (Baker's yeast).